The following is a 39-amino-acid chain: Bacteriocin SRCAM 602 (39 aa).

Belongs to the bacteriocin class IIA/YGNGV family.

The protein localises to the secreted. Bacteriocin with antibacterial activity against C.jejuni. This chain is Bacteriocin SRCAM 602, found in Paenibacillus polymyxa (Bacillus polymyxa).